The chain runs to 401 residues: MGRAKRVVLAYSGGVDTSVCIPYLKQEWGVEEVITLAADLGQGDELGPIQEKALRCGAIESLVVNAQEEFVKEYAFPSIQANALYENRYPLSTALARPLIAKLLVEAAEKYGADAVSHGCTGKGNDQVRFDVGIMALNPSLKVLAPAREWGMSREETIAYGEKFGIESPVKKSSPFSIDRNLLGRSIEAGPLEDPMTEPPEEIYLMTKAIADTPNEPEYVDIGFNQGIPVSLNGENLAPVTLISQLNDLVGKHGVGRLDMIENRVVGIKSREIYEAPALLVLIDAHRDLESLTLTGDVTQYKRGIEDTYGQLIYKGLWYSPLKEAIDAFILKTQEQVTGSVRVKLFKGNAKVVGRQSVNSIYSPDLATYGAEDQFDHKAAEGFIYVWGLPSKVWAEKTRGK.

ATP is bound by residues alanine 10–serine 18 and alanine 38. Tyrosine 89 is a binding site for L-citrulline. Glycine 119 lines the ATP pocket. The L-aspartate site is built by threonine 121, asparagine 125, and aspartate 126. Asparagine 125 is an L-citrulline binding site. L-citrulline-binding residues include arginine 129, serine 177, serine 186, glutamate 262, and tyrosine 274.

This sequence belongs to the argininosuccinate synthase family. Type 1 subfamily. As to quaternary structure, homotetramer.

It localises to the cytoplasm. The catalysed reaction is L-citrulline + L-aspartate + ATP = 2-(N(omega)-L-arginino)succinate + AMP + diphosphate + H(+). Its pathway is amino-acid biosynthesis; L-arginine biosynthesis; L-arginine from L-ornithine and carbamoyl phosphate: step 2/3. In Microcystis aeruginosa (strain NIES-843 / IAM M-2473), this protein is Argininosuccinate synthase.